The primary structure comprises 379 residues: UDP-4-amino-4-deoxy-L-arabinose--oxoglutarate aminotransferase (379 aa).

Position 182 is an N6-(pyridoxal phosphate)lysine (lysine 182).

This sequence belongs to the DegT/DnrJ/EryC1 family. ArnB subfamily. Homodimer. The cofactor is pyridoxal 5'-phosphate.

It carries out the reaction UDP-4-amino-4-deoxy-beta-L-arabinose + 2-oxoglutarate = UDP-beta-L-threo-pentopyranos-4-ulose + L-glutamate. It participates in nucleotide-sugar biosynthesis; UDP-4-deoxy-4-formamido-beta-L-arabinose biosynthesis; UDP-4-deoxy-4-formamido-beta-L-arabinose from UDP-alpha-D-glucuronate: step 2/3. Its pathway is bacterial outer membrane biogenesis; lipopolysaccharide biosynthesis. Its function is as follows. Catalyzes the conversion of UDP-4-keto-arabinose (UDP-Ara4O) to UDP-4-amino-4-deoxy-L-arabinose (UDP-L-Ara4N). The modified arabinose is attached to lipid A and is required for resistance to polymyxin and cationic antimicrobial peptides. The chain is UDP-4-amino-4-deoxy-L-arabinose--oxoglutarate aminotransferase from Escherichia coli O127:H6 (strain E2348/69 / EPEC).